Reading from the N-terminus, the 300-residue chain is Urease accessory protein UreD (300 aa).

The protein belongs to the UreD family. As to quaternary structure, ureD, UreF and UreG form a complex that acts as a GTP-hydrolysis-dependent molecular chaperone, activating the urease apoprotein by helping to assemble the nickel containing metallocenter of UreC. The UreE protein probably delivers the nickel.

The protein resides in the cytoplasm. Functionally, required for maturation of urease via the functional incorporation of the urease nickel metallocenter. In Prochlorococcus marinus (strain AS9601), this protein is Urease accessory protein UreD.